The chain runs to 487 residues: Betaine aldehyde dehydrogenase (487 aa).

K(+)-binding residues include I27 and D93. 149 to 151 (GAW) is a binding site for NAD(+). Residue K161 is the Charge relay system of the active site. Residues 175-178 (KPSE) and 228-231 (SVPT) each bind NAD(+). The active-site Proton acceptor is E249. NAD(+) contacts are provided by G251, C283, and E384. Catalysis depends on C283, which acts as the Nucleophile. Cysteine sulfenic acid (-SOH) is present on C283. 2 residues coordinate K(+): K454 and G457. Catalysis depends on E461, which acts as the Charge relay system.

The protein belongs to the aldehyde dehydrogenase family. Dimer of dimers. Requires K(+) as cofactor.

The catalysed reaction is betaine aldehyde + NAD(+) + H2O = glycine betaine + NADH + 2 H(+). The protein operates within amine and polyamine biosynthesis; betaine biosynthesis via choline pathway; betaine from betaine aldehyde: step 1/1. Functionally, involved in the biosynthesis of the osmoprotectant glycine betaine. Catalyzes the irreversible oxidation of betaine aldehyde to the corresponding acid. The protein is Betaine aldehyde dehydrogenase of Mesorhizobium japonicum (strain LMG 29417 / CECT 9101 / MAFF 303099) (Mesorhizobium loti (strain MAFF 303099)).